The following is a 478-amino-acid chain: ATP synthase subunit beta (478 aa).

G151–T158 provides a ligand contact to ATP.

The protein belongs to the ATPase alpha/beta chains family. In terms of assembly, F-type ATPases have 2 components, CF(1) - the catalytic core - and CF(0) - the membrane proton channel. CF(1) has five subunits: alpha(3), beta(3), gamma(1), delta(1), epsilon(1). CF(0) has three main subunits: a(1), b(2) and c(9-12). The alpha and beta chains form an alternating ring which encloses part of the gamma chain. CF(1) is attached to CF(0) by a central stalk formed by the gamma and epsilon chains, while a peripheral stalk is formed by the delta and b chains.

The protein localises to the cell inner membrane. It catalyses the reaction ATP + H2O + 4 H(+)(in) = ADP + phosphate + 5 H(+)(out). Its function is as follows. Produces ATP from ADP in the presence of a proton gradient across the membrane. The catalytic sites are hosted primarily by the beta subunits. This is ATP synthase subunit beta from Xanthobacter autotrophicus (strain ATCC BAA-1158 / Py2).